The following is a 129-amino-acid chain: Natriuretic peptides B (129 aa).

Positions 1–26 are cleaved as a signal peptide; it reads MDPQTALSRALLLLLFLHLSLLGCRS. C107 and C123 are disulfide-bonded.

This sequence belongs to the natriuretic peptide family. The precursor molecule is proteolytically cleaved, possibly by FURIN or CORIN, to produce the active peptide. May undergo further proteolytic cleavage by various proteases such as DPP4, MME and possibly FAP, to give rise to a variety of shorter peptides. May be cleaved at Pro-99 by the prolyl endopeptidase FAP (seprase) activity (in vitro). May be degraded by IDE. During IDE degradation, the resulting products initially increase the activation of NPR1 and can also stimulate NPR2 to produce cGMP before the fragments are completely degraded and inactivated by IDE (in vitro).

The protein localises to the secreted. In terms of biological role, cardiac hormone that plays a key role in mediating cardio-renal homeostasis. May also function as a paracrine antifibrotic factor in the heart. Acts by specifically binding and stimulating NPR1 to produce cGMP, which in turn activates effector proteins that drive various biological responses. Involved in regulating the extracellular fluid volume and maintaining the fluid-electrolyte balance through natriuresis, diuresis, vasorelaxation, and inhibition of renin and aldosterone secretion. Binds the clearance receptor NPR3. The protein is Natriuretic peptides B (NPPB) of Bos taurus (Bovine).